Reading from the N-terminus, the 90-residue chain is Small ribosomal subunit protein bS16 (90 aa).

This sequence belongs to the bacterial ribosomal protein bS16 family.

This chain is Small ribosomal subunit protein bS16, found in Lactobacillus gasseri (strain ATCC 33323 / DSM 20243 / BCRC 14619 / CIP 102991 / JCM 1131 / KCTC 3163 / NCIMB 11718 / NCTC 13722 / AM63).